A 117-amino-acid chain; its full sequence is Large ribosomal subunit protein uL23 (117 aa).

It belongs to the universal ribosomal protein uL23 family. In terms of assembly, part of the 50S ribosomal subunit. Contacts protein L29, and trigger factor when it is bound to the ribosome.

In terms of biological role, one of the early assembly proteins it binds 23S rRNA. One of the proteins that surrounds the polypeptide exit tunnel on the outside of the ribosome. Forms the main docking site for trigger factor binding to the ribosome. The polypeptide is Large ribosomal subunit protein uL23 (Acetivibrio thermocellus (strain ATCC 27405 / DSM 1237 / JCM 9322 / NBRC 103400 / NCIMB 10682 / NRRL B-4536 / VPI 7372) (Clostridium thermocellum)).